The chain runs to 239 residues: Uridylate kinase (239 aa).

Residue 12 to 15 coordinates ATP; sequence KLSG. An involved in allosteric activation by GTP region spans residues 21–26; the sequence is GEQGFG. Residue G55 coordinates UMP. ATP contacts are provided by G56 and R60. Residues D75 and 136 to 143 contribute to the UMP site; that span reads TGNPYFST. Positions 163, 169, and 172 each coordinate ATP.

This sequence belongs to the UMP kinase family. In terms of assembly, homohexamer.

The protein localises to the cytoplasm. It carries out the reaction UMP + ATP = UDP + ADP. The protein operates within pyrimidine metabolism; CTP biosynthesis via de novo pathway; UDP from UMP (UMPK route): step 1/1. With respect to regulation, allosterically activated by GTP. Inhibited by UTP. Functionally, catalyzes the reversible phosphorylation of UMP to UDP. The polypeptide is Uridylate kinase (Koribacter versatilis (strain Ellin345)).